The primary structure comprises 445 residues: TNF receptor-associated factor family protein DDB_G0290971 (445 aa).

The RING-type; degenerate zinc finger occupies C23–R67. TRAF-type zinc fingers lie at residues K133–A186 and A186–D242. The stretch at Q269–L307 forms a coiled coil. The 128-residue stretch at K314 to I441 folds into the MATH domain.

Belongs to the TNF receptor-associated factor family. A subfamily.

It localises to the cytoplasm. Functionally, probable adapter protein and signal transducer that links members of the tumor necrosis factor receptor family to different signaling pathways by association with the receptor cytoplasmic domain and kinases. This is TNF receptor-associated factor family protein DDB_G0290971 from Dictyostelium discoideum (Social amoeba).